A 625-amino-acid polypeptide reads, in one-letter code: PTS system beta-glucoside-specific EIIBCA component (625 aa).

One can recognise a PTS EIIB type-1 domain in the interval 1–84 (MTELARKIVA…NSVAGLDEKA (84 aa)). The Periplasmic segment spans residues 1 to 99 (MTELARKIVA…NDDKGNLLNR (99 aa)). Catalysis depends on cysteine 24, which acts as the Phosphocysteine intermediate; for EIIB activity. Residues 100 to 120 (FVYVISGIFTPLIGLMAATGI) traverse the membrane as a helical segment. The 364-residue stretch at 102–465 (YVISGIFTPL…RQPAQGAPQE (364 aa)) folds into the PTS EIIC type-1 domain. At 121–140 (LKGMLALALTFQWTTEQSGT) the chain is on the cytoplasmic side. A helical membrane pass occupies residues 141 to 161 (YLILFSASDALFWFFPIILGY). The Periplasmic segment spans residues 162 to 166 (TAGKR). The helical transmembrane segment at 167 to 187 (FGGNPFTAMVIGGALVHPLIL) threads the bilayer. The Cytoplasmic portion of the chain corresponds to 188–202 (TAFENGQKADALGLD). A helical membrane pass occupies residues 203 to 223 (FLGIPVTLLNYSSSVIPIIFS). Topologically, residues 224 to 244 (AWLCSILERRLNAWLPSAIKN) are periplasmic. A helical membrane pass occupies residues 245 to 265 (FFTPLLCLMVITPVTFLLVGP). Topologically, residues 266-284 (LSTWISELIAAGYLWLYQA) are cytoplasmic. Residues 285–305 (VPAFAGAVMGGFWQIFVMFGL) traverse the membrane as a helical segment. At 306–324 (HWGLVPLCINNFTVLGYDT) the chain is on the periplasmic side. A helical transmembrane segment spans residues 325–345 (MIPLLMPAIMAQVGAALGVFL). At 346–353 (CERDAQKK) the chain is on the cytoplasmic side. Residues 354 to 374 (VVAGSAALTSLFGITEPAVYG) form a helical membrane-spanning segment. The Periplasmic segment spans residues 375 to 380 (VNLPRK). A helical membrane pass occupies residues 381–401 (YPFVIACISGALGATIIGYAQ). At 402-403 (TK) the chain is on the cytoplasmic side. A helical transmembrane segment spans residues 404–424 (VYSFGLPSIFTFMQTIPSTGI). Topologically, residues 425–431 (DFTVWAS) are periplasmic. The helical transmembrane segment at 432-452 (VIGGVIAIGCAFVGTVMLHFI) threads the bilayer. Over 453–625 (TAKRQPAQGA…AGEPLLSIIR (173 aa)) the chain is Cytoplasmic. The region spanning 495–599 (DTTFASGLLG…DLTTPVLISN (105 aa)) is the PTS EIIA type-1 domain. Histidine 547 (tele-phosphohistidine intermediate; for EIIA activity) is an active-site residue.

The protein localises to the cell inner membrane. In terms of biological role, the phosphoenolpyruvate-dependent sugar phosphotransferase system (sugar PTS), a major carbohydrate active -transport system, catalyzes the phosphorylation of incoming sugar substrates concomitantly with their translocation across the cell membrane. This system is involved in beta-glucoside transport. Its function is as follows. Acts both as a kinase and as a phosphatase on BglG. The sequence is that of PTS system beta-glucoside-specific EIIBCA component (bglF) from Escherichia coli (strain K12).